The sequence spans 199 residues: MSFYAAPIARLIEEFEKLPGIGHKTAQRLAFYVLDMPQEKVDRLANAITEAKQKTKFCSVCGNLTDTDVCPLCSSEKRDSSVICVVEDPRDVVAMEKIREFKGLYHVLHGAISPMQGIGPEDIKIKELLDRIKEGNVKEVIIATNPNIEGEATAMYISKLIKPLGVKTTRIAHGIPVGGDLEYADEVTLAKALEGRREI.

The segment at 58–73 adopts a C4-type zinc-finger fold; the sequence is CSVCGNLTDTDVCPLC. Residues 81–176 form the Toprim domain; sequence SVICVVEDPR…KTTRIAHGIP (96 aa).

It belongs to the RecR family.

In terms of biological role, may play a role in DNA repair. It seems to be involved in an RecBC-independent recombinational process of DNA repair. It may act with RecF and RecO. This Acetivibrio thermocellus (strain ATCC 27405 / DSM 1237 / JCM 9322 / NBRC 103400 / NCIMB 10682 / NRRL B-4536 / VPI 7372) (Clostridium thermocellum) protein is Recombination protein RecR.